Here is a 702-residue protein sequence, read N- to C-terminus: Arginine decarboxylase 1, chloroplastic (702 aa).

The transit peptide at 1–52 (MPALAFVDTPIDTFSSIFTPSSVSTAVVDGSCHWSPSLSSSLYRIDGWGAPY) directs the protein to the chloroplast. Lysine 136 carries the N6-(pyridoxal phosphate)lysine modification. Pyridoxal 5'-phosphate is bound by residues serine 288, glycine 325, and 374-377 (ESGR). 320–330 (IDIGGGLGIDY) provides a ligand contact to substrate. 436-437 (YV) provides a ligand contact to substrate. The Proton donor; shared with dimeric partner role is filled by cysteine 524. Aspartate 525 serves as a coordination point for substrate. Residue tyrosine 565 participates in pyridoxal 5'-phosphate binding.

Belongs to the Orn/Lys/Arg decarboxylase class-II family. SpeA subfamily. In terms of assembly, homodimer. Only the dimer is catalytically active, as the active sites are constructed of residues from both monomers. May form a head-to-tail homodimer. Homodimer and heterodimer with ADC2. Pyridoxal 5'-phosphate is required as a cofactor. The cofactor is Mg(2+).

The protein resides in the plastid. The protein localises to the chloroplast. It is found in the cytoplasm. It localises to the cytosol. The enzyme catalyses L-arginine + H(+) = agmatine + CO2. It functions in the pathway amine and polyamine biosynthesis; agmatine biosynthesis; agmatine from L-arginine: step 1/1. In terms of biological role, required for the biosynthesis of putrescine. Catalyzes the first step of polyamine (PA) biosynthesis to produce putrescine from arginine. Is a minor contributor to basal arginine decarboxylase (ADC) activity and putrescine biosynthesis. Accumulation of putrescine plays a positive role in freezing tolerance. Production of polyamines is essential for normal seed development. Controls PA homeostasis which is crucial for normal plant growth and development. The protein is Arginine decarboxylase 1, chloroplastic of Arabidopsis thaliana (Mouse-ear cress).